The sequence spans 262 residues: 5'-nucleotidase SurE (262 aa).

The a divalent metal cation site is built by aspartate 9, aspartate 10, serine 40, and asparagine 95.

Belongs to the SurE nucleotidase family. A divalent metal cation serves as cofactor.

It is found in the cytoplasm. It carries out the reaction a ribonucleoside 5'-phosphate + H2O = a ribonucleoside + phosphate. Nucleotidase that shows phosphatase activity on nucleoside 5'-monophosphates. In Aliarcobacter butzleri (strain RM4018) (Arcobacter butzleri), this protein is 5'-nucleotidase SurE.